We begin with the raw amino-acid sequence, 348 residues long: L-threonine 3-dehydrogenase (348 aa).

Cysteine 42 is a Zn(2+) binding site. Active-site charge relay system residues include threonine 44 and histidine 47. Histidine 67, glutamate 68, cysteine 97, cysteine 100, cysteine 103, and cysteine 111 together coordinate Zn(2+). NAD(+)-binding positions include leucine 179, glutamate 199, arginine 204, 266 to 268 (LGL), and 291 to 292 (IT).

The protein belongs to the zinc-containing alcohol dehydrogenase family. In terms of assembly, homodimer. Homotetramer; dimer of dimers. It depends on Zn(2+) as a cofactor.

It is found in the cytoplasm. It catalyses the reaction L-threonine + NAD(+) = (2S)-2-amino-3-oxobutanoate + NADH + H(+). It participates in amino-acid degradation; L-threonine degradation via oxydo-reductase pathway; glycine from L-threonine: step 1/2. With respect to regulation, is totally inhibited by EDTA in vitro. In terms of biological role, catalyzes the NAD(+)-dependent oxidation of L-threonine to 2-amino-3-ketobutyrate. Is much less efficient when using NADP(+) instead of NAD(+). To a lesser extent, also catalyzes the oxidation of L-serine and DL-threo-3-phenylserine, but not that of L-allo-threonine, D-threonine and D-allo-threonine and many other L-amino acids. The sequence is that of L-threonine 3-dehydrogenase from Pyrococcus horikoshii (strain ATCC 700860 / DSM 12428 / JCM 9974 / NBRC 100139 / OT-3).